The chain runs to 447 residues: Nacrein (447 aa).

The signal sequence occupies residues 1-17; it reads MYLHLTALCVVIPLCYG. N-linked (GlcNAc...) asparagine glycosylation occurs at Asn44. The Alpha-carbonic anhydrase domain occupies 50 to 446; the sequence is AGFSYDRSIC…KNKVTVYKSF (397 aa). Residues His149, His151, and His174 each contribute to the Zn(2+) site. Positions 218 to 329 are disordered; that stretch reads DEPDDEECKH…GENGHKHGCR (112 aa). The span at 224-236 shows a compositional bias: basic and acidic residues; the sequence is ECKHILKGHHPDN. Residues 237 to 321 show a composition bias toward low complexity; the sequence is NENGNGDNGN…NNGENGNNGE (85 aa). A run of 27 repeats spans residues 242–244, 245–247, 248–250, 251–253, 254–256, 257–259, 260–262, 263–265, 266–268, 269–271, 272–274, 275–277, 278–280, 281–283, 284–286, 287–289, 290–292, 293–295, 296–298, 299–301, 302–304, 305–307, 308–310, 311–313, 314–316, 317–318, and 320–322. Residues 242–322 form a 27 X 3 AA approximate tandem repeats of G-X-N region; the sequence is GDNGNNGYNG…NGENGNNGEN (81 aa). Residue Asn261 is glycosylated (N-linked (GlcNAc...) asparagine). 387–388 is a substrate binding site; that stretch reads TT.

Belongs to the alpha-carbonic anhydrase family. Homooligomer; disulfide-linked. May also be disulfide-linked to insoluble organic matrix. Zn(2+) serves as cofactor. In terms of processing, N-glycosylated. Expressed at whole regions of the mantle epithelium tissue. Is found in the aragonitic nacreous and calcitic prismatic and foliated layers.

It localises to the secreted. The protein localises to the extracellular space. Its subcellular location is the extracellular matrix. It catalyses the reaction hydrogencarbonate + H(+) = CO2 + H2O. Acts as a negative regulator for calcification in the shells of mollusks. May function both as a calcium concentrator and as a carbonic anhydrase required for production of carbonate ions, which are assembled to CaCO(3) at mineralization sites. Is important for shell formation in both the calcitic prismatic layer and the aragonitic nacreous layer. This is Nacrein from Pinctada fucata (Akoya pearl oyster).